We begin with the raw amino-acid sequence, 251 residues long: Octanoyltransferase (251 aa).

A BPL/LPL catalytic domain is found at 29–251 (AATPNSLWIC…GQKLSSYLAP (223 aa)). 68–75 (RGGQVTYH) is a binding site for substrate. The interval 137–174 (ARLRPSPQPSPKGRGSSTPVLLPPLPGEGGGGGGPDPD) is disordered. Substrate contacts are provided by residues 184–186 (ALG) and 197–199 (GVA). Cysteine 215 functions as the Acyl-thioester intermediate in the catalytic mechanism.

The protein belongs to the LipB family.

Its subcellular location is the cytoplasm. The catalysed reaction is octanoyl-[ACP] + L-lysyl-[protein] = N(6)-octanoyl-L-lysyl-[protein] + holo-[ACP] + H(+). The protein operates within protein modification; protein lipoylation via endogenous pathway; protein N(6)-(lipoyl)lysine from octanoyl-[acyl-carrier-protein]: step 1/2. In terms of biological role, catalyzes the transfer of endogenously produced octanoic acid from octanoyl-acyl-carrier-protein onto the lipoyl domains of lipoate-dependent enzymes. Lipoyl-ACP can also act as a substrate although octanoyl-ACP is likely to be the physiological substrate. The chain is Octanoyltransferase from Polaromonas sp. (strain JS666 / ATCC BAA-500).